The following is a 330-amino-acid chain: Membrane-associated protein VIPP1, chloroplastic (330 aa).

Residues 1–64 constitute a chloroplast transit peptide; that stretch reads MALKASPVTG…LRLACDNRLR (64 aa). Coiled coils occupy residues 124–259 and 312–329; these read SQKQ…LTQI and KDSE…KAND. The disordered stretch occupies residues 287-312; sequence LSGSSKKGELPPGRSTVAASTRYPFK.

It belongs to the PspA/Vipp/IM30 family. As to quaternary structure, homomultimer. Complex formation involves interaction via the central alpha-helical domain (71-286).

It localises to the plastid. The protein resides in the chloroplast inner membrane. The protein localises to the chloroplast thylakoid membrane. Functionally, required for plastid vesicle formation and thylakoid membrane biogenesis, but not for functional assembly of thylakoid protein complexes. This Arabidopsis thaliana (Mouse-ear cress) protein is Membrane-associated protein VIPP1, chloroplastic.